A 493-amino-acid polypeptide reads, in one-letter code: MLPYMDQVLRAFYQSTHWSTQNSYEDITATSRTLLDFRIPSAIHLQISNKSTPNTFNSLDFSTRSRINGSLSYLYSDAQQLENFMRNSTDIPLQDATETYRQLQPNLNFSVSSGNTLSSDNTTVDNDKKLLHDSKFVKKSLYYGRMYYPSSDLEAMIIKRLNPQTQFMLKGVSSFKESLNVLTCYFQRDSHRNLQEWIFSTSDLLCGYRVLHNFLTTPSKFNTSLYNNSSLSLGAEFWLGLVSLSPGCSTTLRYYTHSTNTGRPLTLTLSWNPLFGHISSTYSAKTGTNSTFCAKYDFNLYSIESNLSFGCEFWQKKHHLLETNKNNNDKLEPISDELVDINSNSRATKLLHENVPDLNLAVNDIPSTLDIPVHKQKLLNDLTYAFSSSLRKIDEERSTIEKFDNKINSSIFTSVWKLSTSLRDKTLKLLWEGKWRGFLISAGTELVFTRGFQESLSDDEKNDNAISISATDTENGNIPVFPTKFGIQFQYST.

The protein belongs to the MDM10 family. In terms of assembly, component of the ER-mitochondria encounter structure (ERMES) or MDM complex, composed of MMM1, MDM10, MDM12 and MDM34. Associates with the mitochondrial outer membrane sorting assembly machinery SAM(core) complex, which consists of SAM35, SAM37 and SAM50, to form a SAM(holo) complex.

The protein localises to the mitochondrion outer membrane. Its function is as follows. Component of the ERMES/MDM complex, which serves as a molecular tether to connect the endoplasmic reticulum and mitochondria. Components of this complex are involved in the control of mitochondrial shape and protein biogenesis and may function in phospholipid exchange. MDM10 is involved in the late assembly steps of the general translocase of the mitochondrial outer membrane (TOM complex). Functions in the TOM40-specific route of the assembly of outer membrane beta-barrel proteins, including the association of TOM40 with the receptor TOM22 and small TOM proteins. Can associate with the SAM(core) complex as well as the MDM12-MMM1 complex, both involved in late steps of the major beta-barrel assembly pathway, that is responsible for biogenesis of all outer membrane beta-barrel proteins. May act as a switch that shuttles between both complexes and channels precursor proteins into the TOM40-specific pathway. Plays a role in mitochondrial morphology and in the inheritance of mitochondria. This is Mitochondrial distribution and morphology protein 10 from Saccharomyces cerevisiae (strain RM11-1a) (Baker's yeast).